The following is a 205-amino-acid chain: Adenylyl-sulfate kinase (205 aa).

Residue 31-38 (GLSGAGKS) participates in ATP binding. The active-site Phosphoserine intermediate is the serine 105.

This sequence belongs to the APS kinase family.

The catalysed reaction is adenosine 5'-phosphosulfate + ATP = 3'-phosphoadenylyl sulfate + ADP + H(+). The protein operates within sulfur metabolism; hydrogen sulfide biosynthesis; sulfite from sulfate: step 2/3. In terms of biological role, catalyzes the synthesis of activated sulfate. The chain is Adenylyl-sulfate kinase from Shewanella sp. (strain MR-4).